Reading from the N-terminus, the 245-residue chain is Carbohydrate deacetylase (245 aa).

Mg(2+) contacts are provided by H59 and H125.

The protein belongs to the YdjC deacetylase family. As to quaternary structure, homodimer. Requires Mg(2+) as cofactor.

Its function is as follows. Probably catalyzes the deacetylation of acetylated carbohydrates an important step in the degradation of oligosaccharides. This Listeria monocytogenes serotype 4b (strain CLIP80459) protein is Carbohydrate deacetylase.